Consider the following 406-residue polypeptide: Cysteine desulfurase (406 aa).

K226 is modified (N6-(pyridoxal phosphate)lysine). Residue C364 is the Cysteine persulfide intermediate of the active site.

Belongs to the class-V pyridoxal-phosphate-dependent aminotransferase family. Csd subfamily. As to quaternary structure, homodimer. Interacts with SufE and the SufBCD complex composed of SufB, SufC and SufD. The interaction with SufE is required to mediate the direct transfer of the sulfur atom from the S-sulfanylcysteine. Pyridoxal 5'-phosphate is required as a cofactor.

It localises to the cytoplasm. It catalyses the reaction (sulfur carrier)-H + L-cysteine = (sulfur carrier)-SH + L-alanine. It carries out the reaction L-selenocysteine + AH2 = hydrogenselenide + L-alanine + A + H(+). Its pathway is cofactor biosynthesis; iron-sulfur cluster biosynthesis. Its function is as follows. Cysteine desulfurases mobilize the sulfur from L-cysteine to yield L-alanine, an essential step in sulfur metabolism for biosynthesis of a variety of sulfur-containing biomolecules. Component of the suf operon, which is activated and required under specific conditions such as oxidative stress and iron limitation. Acts as a potent selenocysteine lyase in vitro, that mobilizes selenium from L-selenocysteine. Selenocysteine lyase activity is however unsure in vivo. The chain is Cysteine desulfurase from Escherichia coli O7:K1 (strain IAI39 / ExPEC).